The chain runs to 289 residues: ATP synthase gamma chain (289 aa).

This sequence belongs to the ATPase gamma chain family. F-type ATPases have 2 components, CF(1) - the catalytic core - and CF(0) - the membrane proton channel. CF(1) has five subunits: alpha(3), beta(3), gamma(1), delta(1), epsilon(1). CF(0) has three main subunits: a, b and c.

It localises to the cell inner membrane. Its function is as follows. Produces ATP from ADP in the presence of a proton gradient across the membrane. The gamma chain is believed to be important in regulating ATPase activity and the flow of protons through the CF(0) complex. The polypeptide is ATP synthase gamma chain (Azobacteroides pseudotrichonymphae genomovar. CFP2).